Reading from the N-terminus, the 456-residue chain is UDP-N-acetylglucosamine 1-carboxyvinyltransferase (456 aa).

A phosphoenolpyruvate-binding site is contributed by 34–35 (KN). R104 is a binding site for UDP-N-acetyl-alpha-D-glucosamine. The active-site Proton donor is C128. C128 carries the 2-(S-cysteinyl)pyruvic acid O-phosphothioketal modification. D319 and I341 together coordinate UDP-N-acetyl-alpha-D-glucosamine.

The protein belongs to the EPSP synthase family. MurA subfamily.

The protein localises to the cytoplasm. It carries out the reaction phosphoenolpyruvate + UDP-N-acetyl-alpha-D-glucosamine = UDP-N-acetyl-3-O-(1-carboxyvinyl)-alpha-D-glucosamine + phosphate. It participates in cell wall biogenesis; peptidoglycan biosynthesis. Its function is as follows. Cell wall formation. Adds enolpyruvyl to UDP-N-acetylglucosamine. The chain is UDP-N-acetylglucosamine 1-carboxyvinyltransferase from Prochlorococcus marinus (strain MIT 9312).